The sequence spans 461 residues: V-type ATP synthase beta chain (461 aa).

It belongs to the ATPase alpha/beta chains family.

Produces ATP from ADP in the presence of a proton gradient across the membrane. The V-type beta chain is a regulatory subunit. In Streptococcus pneumoniae (strain CGSP14), this protein is V-type ATP synthase beta chain.